The chain runs to 259 residues: MAACRALKAVLVDLSGTLHIEDAAVPGAQEALKRLRGTSVIVRFVTNTTKESKQDLLERLRKLEFDISEDEIFTSLTAARSLLEQKQVRPMLLVDDRALPDFKGIQTTDPNAVVMGLAPEHFHYQILNQAFRLLLDGAPLIAIHKARYYKRKDGLALGPGPFVTALEYATDTKATVVGKPEKTFFLEALRGTGCEPEEAVMIGDDCRDDVGGAQDVGMLGILVKTGKYRASDEEKINPPPYLTCESFPHAVDHILQHLL.

Mg(2+) is bound by residues D13 and S15. Residues 13–15 and 46–47 each bind substrate; these read DLS and TN. Residues 47-71 adopt a coiled-coil conformation; that stretch reads NTTKESKQDLLERLRKLEFDISEDE. An N6-succinyllysine modification is found at K50. K179 serves as a coordination point for substrate. D204 provides a ligand contact to Mg(2+).

Belongs to the HAD-like hydrolase superfamily. Mg(2+) serves as cofactor.

The sequence is that of Haloacid dehalogenase-like hydrolase domain-containing protein 2 (HDHD2) from Pongo abelii (Sumatran orangutan).